Here is a 254-residue protein sequence, read N- to C-terminus: Triosephosphate isomerase (254 aa).

12–14 is a substrate binding site; that stretch reads NWK. His99 (electrophile) is an active-site residue. Glu169 serves as the catalytic Proton acceptor. Residues Gly175, Ser214, and 235–236 contribute to the substrate site; that span reads GG.

This sequence belongs to the triosephosphate isomerase family. In terms of assembly, homodimer.

It is found in the cytoplasm. The enzyme catalyses D-glyceraldehyde 3-phosphate = dihydroxyacetone phosphate. The protein operates within carbohydrate biosynthesis; gluconeogenesis. It participates in carbohydrate degradation; glycolysis; D-glyceraldehyde 3-phosphate from glycerone phosphate: step 1/1. Involved in the gluconeogenesis. Catalyzes stereospecifically the conversion of dihydroxyacetone phosphate (DHAP) to D-glyceraldehyde-3-phosphate (G3P). The protein is Triosephosphate isomerase of Bartonella tribocorum (strain CIP 105476 / IBS 506).